The sequence spans 369 residues: D-alanine--D-alanine ligase (369 aa).

Positions 152 to 359 (KKLFAAEGLP…YPSLLATMVE (208 aa)) constitute an ATP-grasp domain. 180 to 235 (RERLGLPVFVKPARGGSSIGVSRVSSWDELDAAVAAARDHDPKVIVEAAIAGRELE) is an ATP binding site. Mg(2+)-binding residues include Asp314, Glu326, and Asn328.

This sequence belongs to the D-alanine--D-alanine ligase family. Requires Mg(2+) as cofactor. Mn(2+) serves as cofactor.

The protein resides in the cytoplasm. The catalysed reaction is 2 D-alanine + ATP = D-alanyl-D-alanine + ADP + phosphate + H(+). Its pathway is cell wall biogenesis; peptidoglycan biosynthesis. Cell wall formation. The sequence is that of D-alanine--D-alanine ligase from Mycolicibacterium paratuberculosis (strain ATCC BAA-968 / K-10) (Mycobacterium paratuberculosis).